Consider the following 306-residue polypeptide: Large ribosomal subunit protein uL18 (306 aa).

It belongs to the universal ribosomal protein uL18 family. As to quaternary structure, component of the large ribosomal subunit (LSU).

Its subcellular location is the cytoplasm. It is found in the nucleus. In terms of biological role, component of the ribosome, a large ribonucleoprotein complex responsible for the synthesis of proteins in the cell. The small ribosomal subunit (SSU) binds messenger RNAs (mRNAs) and translates the encoded message by selecting cognate aminoacyl-transfer RNA (tRNA) molecules. The large subunit (LSU) contains the ribosomal catalytic site termed the peptidyl transferase center (PTC), which catalyzes the formation of peptide bonds, thereby polymerizing the amino acids delivered by tRNAs into a polypeptide chain. The nascent polypeptides leave the ribosome through a tunnel in the LSU and interact with protein factors that function in enzymatic processing, targeting, and the membrane insertion of nascent chains at the exit of the ribosomal tunnel. This Theileria annulata protein is Large ribosomal subunit protein uL18 (RPL5).